Reading from the N-terminus, the 229-residue chain is 2,3-bisphosphoglycerate-dependent phosphoglycerate mutase (229 aa).

Substrate contacts are provided by residues 7 to 14, 20 to 21, Arg-59, 86 to 89, Lys-97, 113 to 114, and 182 to 183; these read RHGQSEWN, TG, ERHY, RR, and GN. His-8 serves as the catalytic Tele-phosphohistidine intermediate. Glu-86 (proton donor/acceptor) is an active-site residue.

Belongs to the phosphoglycerate mutase family. BPG-dependent PGAM subfamily.

It carries out the reaction (2R)-2-phosphoglycerate = (2R)-3-phosphoglycerate. Its pathway is carbohydrate degradation; glycolysis; pyruvate from D-glyceraldehyde 3-phosphate: step 3/5. Its function is as follows. Catalyzes the interconversion of 2-phosphoglycerate and 3-phosphoglycerate. The polypeptide is 2,3-bisphosphoglycerate-dependent phosphoglycerate mutase (Listeria monocytogenes serotype 4a (strain HCC23)).